The sequence spans 240 residues: Protein RoBo-1 (240 aa).

An N-terminal signal peptide occupies residues 1–26 (MSWFLVLKCLLTVCIISHLSVSSTES). Asn42 carries N-linked (GlcNAc...) asparagine glycosylation. 5 cysteine pairs are disulfide-bonded: Cys47/Cys76, Cys81/Cys102, Cys103/Cys108, Cys127/Cys151, and Cys144/Cys171. N-linked (GlcNAc...) asparagine glycosylation occurs at Asn153.

Belongs to the CNF-like-inhibitor family. Post-translationally, N-glycosylated. Expressed abundantly in bone, including the lengthening growth plate where cartilage is remodeled into bone.

It localises to the secreted. May play a novel role in the growth or remodeling of bone. The polypeptide is Protein RoBo-1 (Rattus norvegicus (Rat)).